Consider the following 35-residue polypeptide: MSDIN-like toxin proprotein 6 (35 aa).

Residues 1 to 10 (MSDINGTRLP) constitute a propeptide that is removed on maturation. Residues 11–20 (IPGLIPLGIP) constitute a cross-link (cyclopeptide (Ile-Pro)). Residues 21–35 (CVSDDVNPTLTRGER) constitute a propeptide that is removed on maturation.

It belongs to the MSDIN fungal toxin family. Processed by the macrocyclase-peptidase enzyme POPB to yield a toxic cyclic decapeptide. POPB first removes 10 residues from the N-terminus. Conformational trapping of the remaining peptide forces the enzyme to release this intermediate rather than proceed to macrocyclization. The enzyme rebinds the remaining peptide in a different conformation and catalyzes macrocyclization of the N-terminal 10 residues.

Probable toxin that belongs to the MSDIN-like toxin family responsible for a large number of food poisoning cases and deaths. The protein is MSDIN-like toxin proprotein 6 of Amanita bisporigera (Destroying angel).